The sequence spans 141 residues: MLLPKRTKFRKQFRGRMTGDAKGGDYVAFGDYGLIAMEPAWIKSNQIEACRIVMSRHFRRGGKIYIRIFPDKPVTKKPAETRMGKGKGAVEYWVSVVKPGRVMFEVAGVTEEQAKEAFRLAGHKLPIQTKMVKREVYDEAQ.

Belongs to the universal ribosomal protein uL16 family. In terms of assembly, part of the 50S ribosomal subunit. Contacts the CTC protein (RL25).

Its function is as follows. Binds the 5S and 23S rRNAs and is also seen to make contacts with the A and P site tRNAs. Interacts with A site tRNA mimics, and is probably one of the key factors, along with a helix of the 23S rRNA, in positioning tRNA stems in the peptidyl-transferase center. The sequence is that of Large ribosomal subunit protein uL16 (rplP) from Deinococcus radiodurans (strain ATCC 13939 / DSM 20539 / JCM 16871 / CCUG 27074 / LMG 4051 / NBRC 15346 / NCIMB 9279 / VKM B-1422 / R1).